Consider the following 470-residue polypeptide: Sorting nexin-17 (470 aa).

The 109-residue stretch at 1–109 (MHFSIPETES…SFLRRAQQET (109 aa)) folds into the PX domain. Arg-36, Ser-38, Lys-62, and Arg-75 together coordinate a 1,2-diacyl-sn-glycero-3-phospho-(1D-myo-inositol-3-phosphate). One can recognise a Ras-associating domain in the interval 115–206 (EEVSLEVLLS…YKIVLRKSYW (92 aa)). Positions 115–432 (EEVSLEVLLS…DASRESMVKL (318 aa)) are FERM-like. The tract at residues 270 to 432 (GYLRFDACVA…DASRESMVKL (163 aa)) is PTB-like F3 module. Positions 401–425 (GGNLRRSDSQQAVKSPPLLESPDAS) are disordered. Phosphoserine occurs at positions 407, 409, 415, 421, 437, and 440.

Belongs to the sorting nexin family. Monomer. Interacts with APP (via cytoplasmic YXNPXY motif). Interacts with KIF1B. Interacts with the C-termini of P-selectin, PTC, LDLR, VLDLR, LRP1 and LRP8. Interacts with KRIT1 (via N-terminus). Interacts with HRAS. Interacts with ITGB1 and ITGB5 (via NPxY motif). Interacts with CCDC22 and CCDC93; the interaction associates SNX17 with the CCC complex. Interacts (via C-terminus) with VPS26C and VPS35L; the interactions are direct and associate SNX17 with the retriever complex.

The protein localises to the cytoplasm. It localises to the early endosome. Its subcellular location is the cytoplasmic vesicle membrane. Its function is as follows. Critical regulator of endosomal recycling of numerous surface proteins, including integrins, signaling receptor and channels. Binds to NPxY sequences in the cytoplasmic tails of target cargos. Associates with retriever and CCC complexes to prevent lysosomal degradation and promote cell surface recycling of numerous cargos such as integrins ITGB1, ITGB5 and their associated alpha subunits. Also required for maintenance of normal cell surface levels of APP and LRP1. Interacts with membranes containing phosphatidylinositol 3-phosphate (PtdIns(3P)). The polypeptide is Sorting nexin-17 (Snx17) (Rattus norvegicus (Rat)).